Reading from the N-terminus, the 491-residue chain is MCNTNMSVPTDGAVTTSQIPASEQETLVRPKPLLLKLLKSVGAQKDTYTMKEVLFYLGQYIMTKRLYDEKQQHIVYCSNDLLGDLFGVPSFSVKEHRKIYTMIYRNLVVVNQQESSDSGTSVSENRCHLEGGSDQKDLVQELQEEKPSSSHLVSRPSTSSRRRAISETEENSDELSGERQRKRHKSDSISLSFDESLALCVIREICCERSSSSESTGTPSNPDLDAGVSEHSGDWLDQDSVSDQFSVEFEVESLDSEDYSLSEEGQELSDEDDEVYQVTVYQAGESDTDSFEEDPEISLADYWKCTSCNEMNPPLPSHCNRCWALRENWLPEDKGKDKGEISEKAKLENSTQAEEGFDVPDCKKTIVNDSRESCVEENDDKITQASQSQESEDYSQPSTSSSIIYSSQEDVKEFEREETQDKEESVESSLPLNAIEPCVICQGRPKNGCIVHGKTGHLMACFTCAKKLKKRNKPCPVCRQPIQMIVLTYFP.

The tract at residues 1 to 101 is sufficient to promote the mitochondrial pathway of apoptosis; the sequence is MCNTNMSVPT…SVKEHRKIYT (101 aa). The segment at 1–110 is necessary for interaction with USP2; that stretch reads MCNTNMSVPT…TMIYRNLVVV (110 aa). The region spanning 26 to 109 is the SWIB/MDM2 domain; that stretch reads TLVRPKPLLL…YTMIYRNLVV (84 aa). Positions 141–187 are disordered; the sequence is ELQEEKPSSSHLVSRPSTSSRRRAISETEENSDELSGERQRKRHKSD. Over residues 149–159 the composition is skewed to polar residues; sequence SSHLVSRPSTS. The tract at residues 150–230 is interaction with PYHIN1 and necessary for interaction with RFFL and RNF34; sequence SHLVSRPSTS…NPDLDAGVSE (81 aa). Serine 166 carries the post-translational modification Phosphoserine; by SGK1. The interval 170–306 is interaction with MTBP; it reads ENSDELSGER…ISLADYWKCT (137 aa). Residues 179–185 carry the Nuclear localization signal motif; it reads RQRKRHK. At serine 190 the chain carries Phosphoserine. The Nuclear export signal motif lies at 190 to 202; sequence SLSFDESLALCVI. Residues 210 to 304 are ARF-binding; sequence SSSSESTGTP…PEISLADYWK (95 aa). A disordered region spans residues 211-237; the sequence is SSSESTGTPSNPDLDAGVSEHSGDWLD. Residues 223-232 are interaction with USP7; sequence DLDAGVSEHS. Serine 240, serine 242, serine 246, serine 260, and serine 262 each carry phosphoserine. Residues 242 to 331 are region II; sequence SDQFSVEFEV…CWALRENWLP (90 aa). Positions 253-274 are disordered; it reads SLDSEDYSLSEEGQELSDEDDE. Residues 276-491 are necessary for interaction with USP2; that stretch reads YQVTVYQAGE…IQMIVLTYFP (216 aa). The RanBP2-type zinc-finger motif lies at 299–328; that stretch reads LADYWKCTSCNEMNPPLPSHCNRCWALREN. Cysteine 305, cysteine 308, cysteine 319, and cysteine 322 together coordinate Zn(2+). The interval 371-427 is disordered; that stretch reads RESCVEENDDKITQASQSQESEDYSQPSTSSSIIYSSQEDVKEFEREETQDKEESVE. Serine 386, serine 395, and serine 407 each carry phosphoserine; by ATM. Over residues 394–408 the composition is skewed to low complexity; that stretch reads YSQPSTSSSIIYSSQ. Residues 409–425 are compositionally biased toward basic and acidic residues; the sequence is EDVKEFEREETQDKEES. Threonine 419 bears the Phosphothreonine; by ATM mark. Residues serine 425 and serine 429 each carry the phosphoserine; by ATM modification. The RING-type zinc-finger motif lies at 438–479; the sequence is CVICQGRPKNGCIVHGKTGHLMACFTCAKKLKKRNKPCPVCR. Residues 466 to 473 carry the Nucleolar localization signal motif; sequence KKLKKRNK.

This sequence belongs to the MDM2/MDM4 family. Interacts with p53/TP53, TP73/p73, RBL5 and RP11. Binds specifically to RNA. Can interact with RB1, E1A-associated protein EP300 and the E2F1 transcription factor. Forms a ternary complex with p53/TP53 and WWOX. Interacts with CDKN2AIP, RFWD3, USP7, PYHIN1, and RBBP6. Interacts with ARRB1 and ARRB2. Interacts with PSMA3. Found in a trimeric complex with MDM2, MDM4 and USP2. Interacts with USP2 (via N-terminus and C-terminus). Interacts with MDM4. Part of a complex with MDM2, DAXX, RASSF1 and USP7. Part of a complex with DAXX, MDM2 and USP7. Interacts directly with DAXX and USP7. Interacts (via C-terminus) with RASSF1 isoform A (via N-terminus); the interaction is independent of TP53. Interacts with APEX1; leading to its ubiquitination and degradation. Interacts with RYBP; this inhibits ubiquitination of TP53. Identified in a complex with RYBP and p53/TP53. Also a component of the TRIM28/KAP1-MDM2-p53/TP53 complex involved in regulating p53/TP53 stabilization and activity. Binds directly both p53/TP53 and TRIM28. Component of the TRIM28/KAP1-ERBB4-MDM2 complex involved in connecting growth factor responses with DNA damage. Interacts directly with both TRIM28 and ERBB4 in the complex. Interacts with DYRK2. Interacts with IGF1R. Interacts with TRIM13; the interaction ubiquitinates MDM2 leading to its proteasomal degradation. Interacts with SNAI1; this interaction promotes SNAI1 ubiquitination. Interacts with NOTCH1 (via intracellular domain). Interacts with FHIT. Interacts with RFFL and RNF34; the interaction stabilizes MDM2. Interacts with CDK5RAP3 and CDKN2A/ARF; form a ternary complex involved in regulation of p53/TP53. Interacts with MTA1. Interacts with AARB2. Interacts with MTBP. Interacts with PML. Interacts with TBRG1. Interacts (via its RanBP2-type zinc finger domain) with RPL11 in the 5S RNP complex composed of 5S RNA, RPL5 and RPL11; this interaction occurs in the nucleoplasm and negatively regulates MDM2-mediated TP53 ubiquitination and degradation. Interacts with ADGRB1; the interaction results in inhibition of MDM2-mediated ubiquitination and degradation of DLG4/PSD95, promoting DLG4 stability and regulating synaptic plasticity. Interacts with RPL23A; this interaction may promote p53/TP53 polyubiquitination. Interacts with NDUFS1. Interacts with MORN3; the interaction enhances the ubiquitination of p53/TP53. As to quaternary structure, (Microbial infection) Interacts with herpes virus 8 protein v-IRF4. In terms of assembly, (Microbial infection) Interacts with and ubiquitinates HIV-1 Tat. Phosphorylation on Ser-166 by SGK1 activates ubiquitination of p53/TP53. Phosphorylated at multiple sites near the RING domain by ATM upon DNA damage; this promotes its ubiquitination and degradation, preventing p53/TP53 degradation. Post-translationally, autoubiquitination leads to proteasomal degradation; resulting in p53/TP53 activation it may be regulated by SFN. Also ubiquitinated by TRIM13. ATM-phosphorylated MDM2 is ubiquitinated by the SCF(FBXO31) complex in response to genotoxic stress, promoting its degradation and p53/TP53-mediated DNA damage response. Deubiquitinated by USP2 leads to its accumulation and increases deubiquitination and degradation of p53/TP53. Deubiquitinated by USP7 leading to its stabilization. As to expression, ubiquitous. Isoform Mdm2-A, isoform Mdm2-B, isoform Mdm2-C, isoform Mdm2-D, isoform Mdm2-E, isoform Mdm2-F and isoform Mdm2-G are observed in a range of cancers but absent in normal tissues.

It localises to the nucleus. The protein localises to the nucleoplasm. It is found in the cytoplasm. The protein resides in the nucleolus. It catalyses the reaction S-ubiquitinyl-[E2 ubiquitin-conjugating enzyme]-L-cysteine + [acceptor protein]-L-lysine = [E2 ubiquitin-conjugating enzyme]-L-cysteine + N(6)-ubiquitinyl-[acceptor protein]-L-lysine.. In terms of biological role, E3 ubiquitin-protein ligase that mediates ubiquitination of p53/TP53, leading to its degradation by the proteasome. Inhibits p53/TP53- and p73/TP73-mediated cell cycle arrest and apoptosis by binding its transcriptional activation domain. Also acts as a ubiquitin ligase E3 toward itself and ARRB1. Permits the nuclear export of p53/TP53. Promotes proteasome-dependent ubiquitin-independent degradation of retinoblastoma RB1 protein. Inhibits DAXX-mediated apoptosis by inducing its ubiquitination and degradation. Component of the TRIM28/KAP1-MDM2-p53/TP53 complex involved in stabilizing p53/TP53. Also a component of the TRIM28/KAP1-ERBB4-MDM2 complex which links growth factor and DNA damage response pathways. Mediates ubiquitination and subsequent proteasome degradation of DYRK2 in nucleus. Ubiquitinates IGF1R and SNAI1 and promotes them to proteasomal degradation. Ubiquitinates DCX, leading to DCX degradation and reduction of the dendritic spine density of olfactory bulb granule cells. Ubiquitinates DLG4, leading to proteasomal degradation of DLG4 which is required for AMPA receptor endocytosis. Negatively regulates NDUFS1, leading to decreased mitochondrial respiration, marked oxidative stress, and commitment to the mitochondrial pathway of apoptosis. Binds NDUFS1 leading to its cytosolic retention rather than mitochondrial localization resulting in decreased supercomplex assembly (interactions between complex I and complex III), decreased complex I activity, ROS production, and apoptosis. The protein is E3 ubiquitin-protein ligase Mdm2 (MDM2) of Homo sapiens (Human).